Here is a 216-residue protein sequence, read N- to C-terminus: Transmembrane emp24 domain-containing protein eca (216 aa).

An N-terminal signal peptide occupies residues 1-20; the sequence is MRDQFISLALILCVLHSACG. Topologically, residues 21–182 are lumenal; that stretch reads LYFHISETER…FRHTSESTNS (162 aa). Positions 30-126 constitute a GOLD domain; that stretch reads RKCFIEEVPD…QLRVHLDIQV (97 aa). Residues 134 to 164 are a coiled coil; sequence ANVAQKEKLTELQLRIRQLLDQVEQITKEQN. Residues 183 to 203 form a helical membrane-spanning segment; it reads RVLWWSLAQTVVLVCMGFWQM. Residues 204–216 lie on the Cytoplasmic side of the membrane; it reads RHLKSFFEAKKLV. The short motif at 213 to 216 is the Prevents secretion from ER element; sequence KKLV.

The protein belongs to the EMP24/GP25L family.

It localises to the endoplasmic reticulum membrane. Its function is as follows. Eca and bai are essential, though not redundant, for dorsoventral patterning of the embryo. Specifically required during early embryogenesis for the activity of maternal tkv, while the zygotic tkv is not affected. Involved in Golgi organization. In Drosophila simulans (Fruit fly), this protein is Transmembrane emp24 domain-containing protein eca.